A 1106-amino-acid chain; its full sequence is MSAKAVSELSGKEVLYKYFEPSGLLSAPHAFHVKAGENFDEIANKYEWLARDNKGVIKPDQLIKRRGKLGLVKIGTPQELKAWFEKTGDSYVRVGQTEGRLHTFIVEPFCAHTEKDEMYIAIYSERFRDVIMFYEQGGVDIGDVEEKARTVSVPVQLNENAMTPSDEELTTLLGPLKDSDIVRRFVVELYKAYKDLHFTYLEINPFVLLNNQIHVLDLAARLDETANFLCADKWKSRLTPYGGPNHVEFPAPFGRDLTSEEQYISEMDAKTGASLKLTILNRKGRVWTMVAGGGASVVFTDTVCDLGGASELANYGEYSGDPSESQTYEYAKTLLSVMTEGTPRPDGKVLIIGGSIANFTNVAKTFGGIVRAFETFVSKLKEHKVTIFVRRGGPNYQEGLRRIKDAATKLELPIHVFGPETHMTAIVGAALGVKPMPTVPTAPQTTGQFLLSPERNTGGTERAPPSPAANATPTEHPLTTAQQNKLKSFRGLFEDDTKAIIWGQQAKAIQGMLDFDYVCRRSSPSVVASTYPFTGDNKQKYYFGQKEILIPAYKSMAKAFATHPDASIMVTFASMRSVFETVLEALEFPQIKVIAIIAEGVPENQTRKLLKIAHDRGVTLVGPATVGGIKPGCFKIGNTGGMMDNILASKLYRPGSVAYVSRSGGMSNELNNIISQNTNGVYEGIAIGGDRYPGSTYTDHVIRYQNDDRVKMIVLLGEVGGVEEYKIVDLLKQKKVTKPLVAWCIGTCADHITSEVQFGHAGASANALGETAACKNAALRASGALVPESFDDLGNKIRQTYDELVSQQIIVPQPEVPPPAVPMDYAWARELGLIRKPASFMTSICDERGEELNYAGVPITKVLESDMGIGGVLGLLWFQKRLPPHANKFIEICLMLTADHGPAVSGAHNTIVCARAGKDLISSLTSGLLTIGDRFGGALDGAARQFSEAFDQGWSANQFVSEMRKKGKHIMGIGHRVKSINNPDKRVEILKRFAMDKKEFAQETPLFEYALEVEKITTAKKPNLILNVDGAIAILFVDILRHSGMFTKQEAEETIEIGSLNGLFVLGRSIGFIGHYLDQSRLKQGLYRHPWDDISYIMPESNLVKF.

3 residues coordinate citrate: Asn-358, Thr-360, and Arg-391. Residues 442 to 459 are compositionally biased toward polar residues; that stretch reads APQTTGQFLLSPERNTGG. Residues 442–478 are disordered; it reads APQTTGQFLLSPERNTGGTERAPPSPAANATPTEHPL. ATP contacts are provided by residues 701-721 and 752-778; these read VIRYQNDDRVKMIVLLGEVGG and ITSEVQFGHAGASANALGETAACKNAA. Glu-718 provides a ligand contact to Mg(2+). His-760 (tele-phosphohistidine intermediate) is an active-site residue. A CoA-binding site is contributed by 779 to 789; the sequence is LRASGALVPES.

In the N-terminal section; belongs to the succinate/malate CoA ligase beta subunit family. The protein in the C-terminal section; belongs to the succinate/malate CoA ligase alpha subunit family. Homotetramer.

The protein resides in the cytoplasm. It carries out the reaction oxaloacetate + acetyl-CoA + ADP + phosphate = citrate + ATP + CoA. Catalyzes the cleavage of citrate into oxaloacetate and acetyl-CoA, the latter serving as common substrate in multiple biochemical reactions in protein, carbohydrate and lipid metabolism. The protein is Probable ATP-citrate synthase of Caenorhabditis elegans.